The primary structure comprises 269 residues: BAG family molecular chaperone regulator 4 (269 aa).

The interval 1–40 (MMHNSTEESEWEVRPGGMLVQRRDDAASSDHKPLQDPDSA) is disordered. The span at 21 to 35 (QRRDDAASSDHKPLQ) shows a compositional bias: basic and acidic residues. A Ubiquitin-like domain is found at 46–122 (QTIRITVSHG…LVVVVEDTNK (77 aa)). Residues 138 to 219 (AIAAVNAVTG…NLQEAVDKLK (82 aa)) enclose the BAG domain. Residues 241 to 269 (SFGNGVGSLNPPPPASPSANVTQDWEKFD) are disordered.

As to quaternary structure, binds to the ATPase domain of HSP70/HSC70 chaperones. Interacts with HSP70-1. In terms of tissue distribution, detected in stems, leaves, flowers and roots.

In terms of biological role, co-chaperone that regulates diverse cellular pathways, such as programmed cell death and stress responses. The protein is BAG family molecular chaperone regulator 4 (BAG4) of Arabidopsis thaliana (Mouse-ear cress).